Consider the following 77-residue polypeptide: U8-lycotoxin-Ls1m (77 aa).

Positions 1–20 are cleaved as a signal peptide; sequence MKLMIFTGLVLFAIVRLIEA. The propeptide occupies 21 to 26; it reads QAENEK.

It belongs to the neurotoxin 19 (CSTX) family. 08 (U8-Lctx) subfamily. Post-translationally, contains 4 disulfide bonds. As to expression, expressed by the venom gland.

It localises to the secreted. This is U8-lycotoxin-Ls1m from Lycosa singoriensis (Wolf spider).